Reading from the N-terminus, the 462-residue chain is Argininosuccinate lyase (462 aa).

Belongs to the lyase 1 family. Argininosuccinate lyase subfamily.

The protein resides in the cytoplasm. The enzyme catalyses 2-(N(omega)-L-arginino)succinate = fumarate + L-arginine. Its pathway is amino-acid biosynthesis; L-arginine biosynthesis; L-arginine from L-ornithine and carbamoyl phosphate: step 3/3. The chain is Argininosuccinate lyase from Bacillus cereus (strain B4264).